We begin with the raw amino-acid sequence, 651 residues long: Translation factor GUF1 homolog, mitochondrial (651 aa).

Residues methionine 1 to phenylalanine 26 constitute a mitochondrion transit peptide. The 178-residue stretch at lysine 51–lysine 228 folds into the tr-type G domain. Residues alanine 60–serine 67, aspartate 121–histidine 125, and asparagine 175–aspartate 178 each bind GTP.

The protein belongs to the TRAFAC class translation factor GTPase superfamily. Classic translation factor GTPase family. LepA subfamily.

The protein localises to the mitochondrion inner membrane. The catalysed reaction is GTP + H2O = GDP + phosphate + H(+). Its function is as follows. Promotes mitochondrial protein synthesis. May act as a fidelity factor of the translation reaction, by catalyzing a one-codon backward translocation of tRNAs on improperly translocated ribosomes. Binds to mitochondrial ribosomes in a GTP-dependent manner. The sequence is that of Translation factor GUF1 homolog, mitochondrial from Brugia malayi (Filarial nematode worm).